The sequence spans 252 residues: Adapter protein MecA (252 aa).

Belongs to the MecA family. Homodimer.

Its function is as follows. Enables the recognition and targeting of unfolded and aggregated proteins to the ClpC protease or to other proteins involved in proteolysis. This chain is Adapter protein MecA, found in Streptococcus uberis (strain ATCC BAA-854 / 0140J).